Here is a 2291-residue protein sequence, read N- to C-terminus: Protein Ycf2 (2291 aa).

1645 to 1652 (GSIGTGRS) provides a ligand contact to ATP.

This sequence belongs to the Ycf2 family.

It is found in the plastid. It localises to the chloroplast stroma. Probable ATPase of unknown function. Its presence in a non-photosynthetic plant (Epifagus virginiana) and experiments in tobacco indicate that it has an essential function which is probably not related to photosynthesis. This Olimarabidopsis pumila (Dwarf rocket) protein is Protein Ycf2.